The primary structure comprises 175 residues: Putative lipoprotein LppN (175 aa).

The signal sequence occupies residues 1–20 (MRLPGRHVLYALSAVTMLAA). A lipid anchor (N-palmitoyl cysteine) is attached at Cys-21. Cys-21 is lipidated: S-diacylglycerol cysteine. The disordered stretch occupies residues 31-56 (ASTNMNPTNPPATAETATVSPTPAPQ). Residues 33 to 48 (TNMNPTNPPATAETAT) show a composition bias toward low complexity.

The protein localises to the cell membrane. The polypeptide is Putative lipoprotein LppN (lppN) (Mycobacterium bovis (strain ATCC BAA-935 / AF2122/97)).